A 205-amino-acid chain; its full sequence is Guanylate kinase (205 aa).

The region spanning 5–184 (GLLIVLSGPS…AVQKIKGIVE (180 aa)) is the Guanylate kinase-like domain. 12 to 19 (GPSGVGKG) contacts ATP.

This sequence belongs to the guanylate kinase family.

It localises to the cytoplasm. The enzyme catalyses GMP + ATP = GDP + ADP. In terms of biological role, essential for recycling GMP and indirectly, cGMP. The sequence is that of Guanylate kinase from Listeria monocytogenes serotype 4b (strain F2365).